A 196-amino-acid chain; its full sequence is Small ribosomal subunit protein uS4c (196 aa).

The tract at residues 16–36 (GALPGLTRKTPKSGSNLKKKF) is disordered. The S4 RNA-binding domain occupies 89–169 (MRLDNILFRL…LPKHLTIDTL (81 aa)).

The protein belongs to the universal ribosomal protein uS4 family. In terms of assembly, part of the 30S ribosomal subunit. Contacts protein S5. The interaction surface between S4 and S5 is involved in control of translational fidelity.

The protein localises to the plastid. It is found in the chloroplast. Functionally, one of the primary rRNA binding proteins, it binds directly to 16S rRNA where it nucleates assembly of the body of the 30S subunit. Its function is as follows. With S5 and S12 plays an important role in translational accuracy. The chain is Small ribosomal subunit protein uS4c (rps4) from Cinna latifolia (Drooping woodreed).